The following is a 125-amino-acid chain: Holo-[acyl-carrier-protein] synthase (125 aa).

Mg(2+) is bound by residues aspartate 8 and glutamate 57.

This sequence belongs to the P-Pant transferase superfamily. AcpS family. Requires Mg(2+) as cofactor.

It is found in the cytoplasm. It catalyses the reaction apo-[ACP] + CoA = holo-[ACP] + adenosine 3',5'-bisphosphate + H(+). Its function is as follows. Transfers the 4'-phosphopantetheine moiety from coenzyme A to a Ser of acyl-carrier-protein. This chain is Holo-[acyl-carrier-protein] synthase, found in Natranaerobius thermophilus (strain ATCC BAA-1301 / DSM 18059 / JW/NM-WN-LF).